A 190-amino-acid polypeptide reads, in one-letter code: MIILGIDPGLSLTGWGVVEAFSRDKVNPLQYGCIKTMPSVPLIQRLQTINTKLQSVIDKYKPEVASIEELFFFKATKSIAAVGQTRGAIILTASLNKIPLFEYNPKSVKTALTGYGSADKYQMQRIVKTFLRLKEIPKPDDAADALAIAVCHVNTINWNANNNNNASVFLKNKVFKESAKPNLLKKLFSL.

Catalysis depends on residues aspartate 7, glutamate 68, and aspartate 141. 3 residues coordinate Mg(2+): aspartate 7, glutamate 68, and aspartate 141.

Belongs to the RuvC family. As to quaternary structure, homodimer which binds Holliday junction (HJ) DNA. The HJ becomes 2-fold symmetrical on binding to RuvC with unstacked arms; it has a different conformation from HJ DNA in complex with RuvA. In the full resolvosome a probable DNA-RuvA(4)-RuvB(12)-RuvC(2) complex forms which resolves the HJ. Mg(2+) is required as a cofactor.

Its subcellular location is the cytoplasm. The catalysed reaction is Endonucleolytic cleavage at a junction such as a reciprocal single-stranded crossover between two homologous DNA duplexes (Holliday junction).. Its function is as follows. The RuvA-RuvB-RuvC complex processes Holliday junction (HJ) DNA during genetic recombination and DNA repair. Endonuclease that resolves HJ intermediates. Cleaves cruciform DNA by making single-stranded nicks across the HJ at symmetrical positions within the homologous arms, yielding a 5'-phosphate and a 3'-hydroxyl group; requires a central core of homology in the junction. The consensus cleavage sequence is 5'-(A/T)TT(C/G)-3'. Cleavage occurs on the 3'-side of the TT dinucleotide at the point of strand exchange. HJ branch migration catalyzed by RuvA-RuvB allows RuvC to scan DNA until it finds its consensus sequence, where it cleaves and resolves the cruciform DNA. This chain is Crossover junction endodeoxyribonuclease RuvC, found in Endomicrobium trichonymphae.